The sequence spans 348 residues: Rhodopsin (348 aa).

M1 carries the post-translational modification N-acetylmethionine. Topologically, residues M1–Q36 are extracellular. N-linked (GlcNAc...) asparagine glycans are attached at residues N2 and N15. Residues F37–V61 form a helical membrane-spanning segment. The Cytoplasmic portion of the chain corresponds to T62–N73. A helical membrane pass occupies residues Y74–Y96. Topologically, residues T97–C110 are extracellular. The cysteines at positions 110 and 187 are disulfide-linked. Residues N111–I133 traverse the membrane as a helical segment. Positions E134–Y136 match the 'Ionic lock' involved in activated form stabilization motif. Residues E134 to H152 are Cytoplasmic-facing. The chain crosses the membrane as a helical span at residues A153–V173. Over G174–S202 the chain is Extracellular. E201 provides a ligand contact to Zn(2+). The chain crosses the membrane as a helical span at residues F203–G224. Residues Q225–R252 lie on the Cytoplasmic side of the membrane. Residues M253 to Y274 traverse the membrane as a helical segment. Residues I275–I286 lie on the Extracellular side of the membrane. Q279 is a binding site for Zn(2+). Residues F287 to M308 traverse the membrane as a helical segment. The residue at position 296 (K296) is an N6-(retinylidene)lysine. The Cytoplasmic segment spans residues M309–A348. Residues C322 and C323 are each lipidated (S-palmitoyl cysteine). Residues D330–A348 are interaction with SAG. Phosphoserine occurs at positions 334 and 338. Residues T340 and T342 each carry the phosphothreonine modification. The residue at position 343 (S343) is a Phosphoserine.

Belongs to the G-protein coupled receptor 1 family. Opsin subfamily. In terms of assembly, homodimer. Interacts (phosphorylated form) with SAG. Interacts with GNAT1. Interacts with GNAT3. SAG and G-proteins compete for a common binding site. Interacts with GRK1. Interacts with PRCD; the interaction promotes PRCD stability. Forms a complex with ASAP1 and ARF4. Forms a complex with ASAP1, RAB11A, Rabin8/RAB3IP, ARF4 and RAB11FIP3; the complex regulates Golgi-to-cilia rhodopsin/RHO transport in photoreceptors. Phosphorylated on some or all of the serine and threonine residues present in the C-terminal region. Post-translationally, contains one covalently linked retinal chromophore. Upon light absorption, the covalently bound 11-cis-retinal is converted to all-trans-retinal. After hydrolysis of the Schiff base and release of the covalently bound all-trans-retinal, active rhodopsin is regenerated by binding of a fresh molecule of 11-cis-retinal.

It is found in the membrane. Its subcellular location is the cell projection. The protein localises to the cilium. The protein resides in the photoreceptor outer segment. Functionally, photoreceptor required for image-forming vision at low light intensity. Required for photoreceptor cell viability after birth. Light-induced isomerization of 11-cis to all-trans retinal triggers a conformational change that activates signaling via G-proteins. Subsequent receptor phosphorylation mediates displacement of the bound G-protein alpha subunit by the arrestin SAG and terminates signaling. In Pagophilus groenlandicus (Harp seal), this protein is Rhodopsin (RHO).